We begin with the raw amino-acid sequence, 212 residues long: Large ribosomal subunit protein uL3 (212 aa).

Position 153 is an N5-methylglutamine (Q153).

It belongs to the universal ribosomal protein uL3 family. Part of the 50S ribosomal subunit. Forms a cluster with proteins L14 and L19. Methylated by PrmB.

Its function is as follows. One of the primary rRNA binding proteins, it binds directly near the 3'-end of the 23S rRNA, where it nucleates assembly of the 50S subunit. This chain is Large ribosomal subunit protein uL3, found in Colwellia psychrerythraea (strain 34H / ATCC BAA-681) (Vibrio psychroerythus).